A 301-amino-acid polypeptide reads, in one-letter code: Probable alpha-L-glutamate ligase 2 (301 aa).

Residues 104–287 form the ATP-grasp domain; it reads LQLLSRKGIG…VTEPIVEYIE (184 aa). ATP-binding positions include Lys-141, 178 to 179, Asp-187, and 211 to 213; these read EY and RSN. Asp-248, Glu-260, and Asn-262 together coordinate Mg(2+). The Mn(2+) site is built by Asp-248, Glu-260, and Asn-262.

Belongs to the RimK family. It depends on Mg(2+) as a cofactor. The cofactor is Mn(2+).

The sequence is that of Probable alpha-L-glutamate ligase 2 from Shewanella baltica (strain OS195).